The chain runs to 247 residues: TM2 domain-containing protein 3 (247 aa).

An N-terminal signal peptide occupies residues 1 to 30; sequence MDLMMALKRVCRVLLFVTQMYVFSGRGSLS. Topologically, residues 31–179 are extracellular; that stretch reads FEYSQPVAQP…RTFPKMLYCN (149 aa). Asparagine 87, asparagine 99, asparagine 139, asparagine 155, asparagine 169, and asparagine 179 each carry an N-linked (GlcNAc...) asparagine glycan. Residues 180 to 200 form a helical membrane-spanning segment; the sequence is WTGGYKWSTALALSITLGGFG. A TM2 domain is found at 183-231; that stretch reads GYKWSTALALSITLGGFGADRFYLGQWREGLGKLFSFGGLGIWTLIDVF. The Cytoplasmic segment spans residues 201–215; the sequence is ADRFYLGQWREGLGK. A helical membrane pass occupies residues 216–236; the sequence is LFSFGGLGIWTLIDVFLISVG. The Extracellular portion of the chain corresponds to 237–247; it reads YVGPADGSLYI.

This sequence belongs to the TM2 family.

It is found in the membrane. This chain is TM2 domain-containing protein 3 (tm2d3), found in Xenopus laevis (African clawed frog).